The primary structure comprises 421 residues: Inner membrane transport protein YdiN (421 aa).

Topologically, residues 1 to 9 (MSQNKAFST) are cytoplasmic. Residues 10-30 (PFILAVLCIYFSYFLHGISVI) traverse the membrane as a helical segment. Residues 31–49 (TLAQNMSSLAEKFSTDNAG) lie on the Periplasmic side of the membrane. A helical transmembrane segment spans residues 50–70 (IAYLISGIGLGRLISILFFGV). The Cytoplasmic segment spans residues 71–78 (ISDKFGRR). Residues 79 to 99 (AVILMAVIMYLLFFFGIPACP) form a helical membrane-spanning segment. Residue asparagine 100 is a topological domain, periplasmic. A helical membrane pass occupies residues 101-121 (LTLAYGLAVCVGIANSALDTG). At 122-136 (GYPALMECFPKASGS) the chain is on the cytoplasmic side. Residues 137-157 (AVILVKAMVSFGQMFYPMLVS) form a helical membrane-spanning segment. The Periplasmic portion of the chain corresponds to 158 to 163 (YMLLNN). The chain crosses the membrane as a helical span at residues 164–184 (IWYGYGLIIPGILFVLITLML). At 185 to 215 (LKSKFPSQLVDASVTNELPQMNSKPLVWLEG) the chain is on the cytoplasmic side. A helical membrane pass occupies residues 216 to 236 (VSSVLFGVAAFSTFYVIVVWM). Residues 237–251 (PKYAMAFAGMSEAEA) lie on the Periplasmic side of the membrane. The chain crosses the membrane as a helical span at residues 252–272 (LKTISYYSMGSLVCVFIFAAL). At 273 to 279 (LKKMVRP) the chain is on the cytoplasmic side. The helical transmembrane segment at 280–300 (IWANVFNSALATITAAIIYLY) threads the bilayer. Over 301–308 (PSPLVCNA) the chain is Periplasmic. The chain crosses the membrane as a helical span at residues 309-329 (GAFVIGFSAAGGILQLGVSVM). The Cytoplasmic portion of the chain corresponds to 330–342 (SEFFPKSKAKVTS). The helical transmembrane segment at 343–363 (IYMMMGGLANFVIPLITGYLS) threads the bilayer. Residues 364 to 369 (NIGLQY) are Periplasmic-facing. A helical transmembrane segment spans residues 370–390 (IIVLDFTFALLALITAIIVFI). The Cytoplasmic segment spans residues 391-421 (RYYRVFIIPENDVRFGERKFCTRLNTIKHRG).

Belongs to the major facilitator superfamily.

Its subcellular location is the cell inner membrane. This Escherichia coli (strain K12) protein is Inner membrane transport protein YdiN (ydiN).